The following is a 209-amino-acid chain: Large ribosomal subunit protein uL4 (209 aa).

The interval 47–72 is disordered; it reads TSSTKTRSEVRGSSKKPWKQKGTGRA. Positions 59-72 are enriched in basic residues; sequence SSKKPWKQKGTGRA.

This sequence belongs to the universal ribosomal protein uL4 family. Part of the 50S ribosomal subunit.

In terms of biological role, one of the primary rRNA binding proteins, this protein initially binds near the 5'-end of the 23S rRNA. It is important during the early stages of 50S assembly. It makes multiple contacts with different domains of the 23S rRNA in the assembled 50S subunit and ribosome. Its function is as follows. Forms part of the polypeptide exit tunnel. The polypeptide is Large ribosomal subunit protein uL4 (Borreliella burgdorferi (strain ZS7) (Borrelia burgdorferi)).